Consider the following 49-residue polypeptide: L-amino-acid oxidase (49 aa).

FAD is bound at residue 43-44 (MS).

The protein belongs to the flavin monoamine oxidase family. FIG1 subfamily. In terms of assembly, homodimer; non-covalently linked. Requires FAD as cofactor. In terms of processing, N-glycosylated. Expressed by the venom gland.

The protein resides in the secreted. The enzyme catalyses an L-alpha-amino acid + O2 + H2O = a 2-oxocarboxylate + H2O2 + NH4(+). It carries out the reaction L-leucine + O2 + H2O = 4-methyl-2-oxopentanoate + H2O2 + NH4(+). In terms of biological role, catalyzes an oxidative deamination of predominantly hydrophobic and aromatic L-amino acids, thus producing hydrogen peroxide that may contribute to the diverse toxic effects of this enzyme. Shows activity on L-Leu. Exhibits diverse biological activities, such as hemorrhage, hemolysis, edema, antibacterial and antiparasitic activities, as well as regulation of platelet aggregation. Its effect on platelets is controversial, since it either induces aggregation or inhibits agonist-induced aggregation. These different effects are probably due to different experimental conditions. In addition, this protein induces apoptosis and necrosis and has inhibitory effects on rat kidney function (decrease of blood flow and glomerular filtration). The polypeptide is L-amino-acid oxidase (Bothrops insularis (Golden lancehead)).